Consider the following 185-residue polypeptide: UPF0669 protein C6orf120 homolog (185 aa).

The first 23 residues, 1 to 23, serve as a signal peptide directing secretion; it reads MAARWRRILIVFVAAQVLCLVNT. N-linked (GlcNAc...) asparagine glycosylation is present at asparagine 47.

The protein belongs to the UPF0669 family.

The protein resides in the secreted. This chain is UPF0669 protein C6orf120 homolog, found in Gallus gallus (Chicken).